The sequence spans 323 residues: uncharacterized protein (323 aa).

A helical transmembrane segment spans residues 4–24 (IIFAFIILFVFLLPMIIFYQP).

The protein localises to the membrane. This is an uncharacterized protein from Escherichia coli (strain K12).